The sequence spans 106 residues: Nucleoid-associated protein bll8115 (106 aa).

Belongs to the YbaB/EbfC family. Homodimer.

Its subcellular location is the cytoplasm. It localises to the nucleoid. Binds to DNA and alters its conformation. May be involved in regulation of gene expression, nucleoid organization and DNA protection. The protein is Nucleoid-associated protein bll8115 of Bradyrhizobium diazoefficiens (strain JCM 10833 / BCRC 13528 / IAM 13628 / NBRC 14792 / USDA 110).